Here is a 739-residue protein sequence, read N- to C-terminus: Double-strand break repair protein mus-23 (739 aa).

Positions 16, 18, 56, and 123 each coordinate Mn(2+). His-124 functions as the Proton donor in the catalytic mechanism. Mn(2+) contacts are provided by His-212, His-240, and His-242. The interval 516 to 739 (FDAGQHKQAQ…KPGLLARRLG (224 aa)) is disordered. Residues 523-532 (QAQRTKRFKR) are compositionally biased toward basic residues. Over residues 559–568 (VEPKGNDRPT) the composition is skewed to basic and acidic residues. Over residues 599–636 (KRGAAAKTTAAAKKAAPGKKAAPAKKAAPAKKAAPAKK) the composition is skewed to low complexity. A compositionally biased stretch (basic residues) spans 637–646 (APARGRKKKT). The segment covering 650 to 686 (DSDEEEEEDYPEDDDEEEEEADEEEEDVIMEDDEEDP) has biased composition (acidic residues). Positions 694 to 722 (KATSRVASTRASARATPVRATPARATQAR) are enriched in low complexity.

The protein belongs to the MRE11/RAD32 family. As to quaternary structure, component of the MRN complex composed of two heterodimers RAD50 and MRE11 associated with a single NBS1. It depends on Mn(2+) as a cofactor.

The protein localises to the nucleus. It is found in the chromosome. The protein resides in the telomere. Its function is as follows. Core component of the MRN complex, which plays a central role in double-strand break (DSB) repair, DNA recombination, maintenance of telomere integrity and meiosis. The MRN complex is involved in the repair of DNA double-strand breaks (DSBs) via homologous recombination (HR), an error-free mechanism which primarily occurs during S and G2 phases. The complex (1) mediates the end resection of damaged DNA, which generates proper single-stranded DNA, a key initial steps in HR, and is (2) required for the recruitment of other repair factors and efficient activation of ATM and ATR upon DNA damage. Within the MRN complex, MRE11 possesses both single-strand endonuclease activity and double-strand-specific 3'-5' exonuclease activity. MRE11 first endonucleolytically cleaves the 5' strand at DNA DSB ends to prevent non-homologous end joining (NHEJ) and licence HR. It then generates a single-stranded DNA gap via 3' to 5' exonucleolytic degradation, which is required for single-strand invasion and recombination. The MRN complex is also required for the processing of R-loops. The sequence is that of Double-strand break repair protein mus-23 (mus-23) from Neurospora crassa (strain ATCC 24698 / 74-OR23-1A / CBS 708.71 / DSM 1257 / FGSC 987).